The following is a 347-amino-acid chain: NADH-ubiquinone oxidoreductase chain 2 (347 aa).

11 consecutive transmembrane segments (helical) span residues 1–21 (MNPM…SIVM), 25–45 (HWFL…PVLM), 60–80 (FLTQ…NLMF), 96–116 (MLLT…FWVP), 127–147 (GLIL…QIYP), 149–169 (INTN…GWGG), 178–198 (IMAY…IYNP), 202–222 (LLNL…LIFA), 239–259 (IITI…PLTG), 274–294 (NSVI…FFYM), and 326–346 (MMPL…FILL).

This sequence belongs to the complex I subunit 2 family. As to quaternary structure, core subunit of respiratory chain NADH dehydrogenase (Complex I) which is composed of 45 different subunits. Interacts with TMEM242.

It localises to the mitochondrion inner membrane. It catalyses the reaction a ubiquinone + NADH + 5 H(+)(in) = a ubiquinol + NAD(+) + 4 H(+)(out). Core subunit of the mitochondrial membrane respiratory chain NADH dehydrogenase (Complex I) that is believed to belong to the minimal assembly required for catalysis. Complex I functions in the transfer of electrons from NADH to the respiratory chain. The immediate electron acceptor for the enzyme is believed to be ubiquinone. This chain is NADH-ubiquinone oxidoreductase chain 2, found in Suncus etruscus (Etruscan shrew).